The following is a 109-amino-acid chain: Large ribosomal subunit protein eL30 (109 aa).

Belongs to the eukaryotic ribosomal protein eL30 family.

In Methanopyrus kandleri (strain AV19 / DSM 6324 / JCM 9639 / NBRC 100938), this protein is Large ribosomal subunit protein eL30.